The chain runs to 92 residues: Small ribosomal subunit protein uS19 (92 aa).

The tract at residues 72 to 92 (GEFSPTRSFRGHAGAKNKGKK) is disordered. Basic residues predominate over residues 80–92 (FRGHAGAKNKGKK).

Belongs to the universal ribosomal protein uS19 family.

Its function is as follows. Protein S19 forms a complex with S13 that binds strongly to the 16S ribosomal RNA. In Flavobacterium johnsoniae (strain ATCC 17061 / DSM 2064 / JCM 8514 / BCRC 14874 / CCUG 350202 / NBRC 14942 / NCIMB 11054 / UW101) (Cytophaga johnsonae), this protein is Small ribosomal subunit protein uS19.